Reading from the N-terminus, the 283-residue chain is 1D-myo-inositol 2-acetamido-2-deoxy-alpha-D-glucopyranoside deacetylase (283 aa).

His-15, Asp-18, and His-150 together coordinate Zn(2+).

The protein belongs to the MshB deacetylase family. Zn(2+) serves as cofactor.

The enzyme catalyses 1D-myo-inositol 2-acetamido-2-deoxy-alpha-D-glucopyranoside + H2O = 1D-myo-inositol 2-amino-2-deoxy-alpha-D-glucopyranoside + acetate. In terms of biological role, catalyzes the deacetylation of 1D-myo-inositol 2-acetamido-2-deoxy-alpha-D-glucopyranoside (GlcNAc-Ins) in the mycothiol biosynthesis pathway. This chain is 1D-myo-inositol 2-acetamido-2-deoxy-alpha-D-glucopyranoside deacetylase, found in Actinosynnema mirum (strain ATCC 29888 / DSM 43827 / JCM 3225 / NBRC 14064 / NCIMB 13271 / NRRL B-12336 / IMRU 3971 / 101).